The sequence spans 95 residues: Aspartyl/glutamyl-tRNA(Asn/Gln) amidotransferase subunit C (95 aa).

This sequence belongs to the GatC family. As to quaternary structure, heterotrimer of A, B and C subunits.

It catalyses the reaction L-glutamyl-tRNA(Gln) + L-glutamine + ATP + H2O = L-glutaminyl-tRNA(Gln) + L-glutamate + ADP + phosphate + H(+). It carries out the reaction L-aspartyl-tRNA(Asn) + L-glutamine + ATP + H2O = L-asparaginyl-tRNA(Asn) + L-glutamate + ADP + phosphate + 2 H(+). Its function is as follows. Allows the formation of correctly charged Asn-tRNA(Asn) or Gln-tRNA(Gln) through the transamidation of misacylated Asp-tRNA(Asn) or Glu-tRNA(Gln) in organisms which lack either or both of asparaginyl-tRNA or glutaminyl-tRNA synthetases. The reaction takes place in the presence of glutamine and ATP through an activated phospho-Asp-tRNA(Asn) or phospho-Glu-tRNA(Gln). This chain is Aspartyl/glutamyl-tRNA(Asn/Gln) amidotransferase subunit C, found in Campylobacter concisus (strain 13826).